The chain runs to 226 residues: uncharacterized protein (226 aa).

A run of 4 helical transmembrane segments spans residues A25–I45, F54–F74, E107–I127, and T153–S173.

The protein resides in the cell membrane. This is an uncharacterized protein from Mycoplasma genitalium (strain ATCC 33530 / DSM 19775 / NCTC 10195 / G37) (Mycoplasmoides genitalium).